Here is an 867-residue protein sequence, read N- to C-terminus: Alanine--tRNA ligase (867 aa).

Zn(2+) is bound by residues H554, H558, C656, and H660.

The protein belongs to the class-II aminoacyl-tRNA synthetase family. Zn(2+) is required as a cofactor.

The protein resides in the cytoplasm. The enzyme catalyses tRNA(Ala) + L-alanine + ATP = L-alanyl-tRNA(Ala) + AMP + diphosphate. Catalyzes the attachment of alanine to tRNA(Ala) in a two-step reaction: alanine is first activated by ATP to form Ala-AMP and then transferred to the acceptor end of tRNA(Ala). Also edits incorrectly charged Ser-tRNA(Ala) and Gly-tRNA(Ala) via its editing domain. This chain is Alanine--tRNA ligase, found in Methylococcus capsulatus (strain ATCC 33009 / NCIMB 11132 / Bath).